A 353-amino-acid polypeptide reads, in one-letter code: Phosphate acyltransferase (353 aa).

Belongs to the PlsX family. Homodimer. Probably interacts with PlsY.

It is found in the cytoplasm. It carries out the reaction a fatty acyl-[ACP] + phosphate = an acyl phosphate + holo-[ACP]. The protein operates within lipid metabolism; phospholipid metabolism. Functionally, catalyzes the reversible formation of acyl-phosphate (acyl-PO(4)) from acyl-[acyl-carrier-protein] (acyl-ACP). This enzyme utilizes acyl-ACP as fatty acyl donor, but not acyl-CoA. The protein is Phosphate acyltransferase of Bradyrhizobium diazoefficiens (strain JCM 10833 / BCRC 13528 / IAM 13628 / NBRC 14792 / USDA 110).